A 197-amino-acid polypeptide reads, in one-letter code: Nucleoid occlusion factor SlmA (197 aa).

Residues 7–67 (INRREHILQC…GLIEFIEDAI (61 aa)) enclose the HTH tetR-type domain. Residues 30-49 (TTAKLAAEVGVSEAALYRHF) constitute a DNA-binding region (H-T-H motif).

Belongs to the nucleoid occlusion factor SlmA family. Homodimer. Interacts with FtsZ.

The protein localises to the cytoplasm. It localises to the nucleoid. In terms of biological role, required for nucleoid occlusion (NO) phenomenon, which prevents Z-ring formation and cell division over the nucleoid. Acts as a DNA-associated cell division inhibitor that binds simultaneously chromosomal DNA and FtsZ, and disrupts the assembly of FtsZ polymers. SlmA-DNA-binding sequences (SBS) are dispersed on non-Ter regions of the chromosome, preventing FtsZ polymerization at these regions. This is Nucleoid occlusion factor SlmA from Shewanella denitrificans (strain OS217 / ATCC BAA-1090 / DSM 15013).